We begin with the raw amino-acid sequence, 146 residues long: Ninjurin-1 (146 aa).

Residues 1-33 (MASEAMELNGGVNRRDDPGARPQQGRMSRNTPL) are disordered. At 1-75 (MASEAMELNG…ELGPSFSFYI (75 aa)) the chain is on the extracellular side. Residues 37-66 (HYANKKSAAESMLDIALLMANASQLKTVLE) form a required to induce plasma membrane rupture region. Positions 41-52 (KKSAAESMLDIA) are helix alpha1. The tract at residues 55 to 71 (MANASQLKTVLELGPSF) is helix alpha2. A glycan (N-linked (GlcNAc...) asparagine) is linked at asparagine 57. The chain crosses the membrane as a helical span at residues 76 to 100 (PLITLISISLTLQIIVGILLIFIVK). Residues 101–110 (WNLNDSSKHY) lie on the Cytoplasmic side of the membrane. A helical membrane pass occupies residues 111–135 (ILNLLENIVTALVFIVVVVNVFITA). Over 136-146 (FGVQRPDDKTS) the chain is Extracellular.

It belongs to the ninjurin family. As to quaternary structure, homooligomer; in response to death stimuli, homooligomerizes into long, highly branched filaments and large, ring-shaped structures in the membrane. Homodimer; in absence of death stimuli, forms an inactive homodimer. Homooligomer; in response to death stimuli, homooligomerizes into long, highly branched filaments and large, ring-shaped structures in the membrane.

The protein resides in the cell membrane. Its subcellular location is the synaptic cell membrane. In normal conditions, NINJ1 is inactivated. In response to death stimuli, homooligomerizes and disrupts membrane integrity by introducing the hydrophilic faces of alpha1 and alpha2 helices into the hydrophobic membrane. Homooligomerization and ability to mediate plasma membrane rupture is inhibited by glycine; it is unclear whether glycine directly or indirectly inhibits homooligomerization. Its activity is regulated as follows. In response to death stimuli, homooligomerizes and disrupts membrane integrity by introducing the hydrophilic faces of alpha1 and alpha2 helices into the hydrophobic membrane. Homooligomerization and ability to mediate plasma membrane rupture is inhibited by glycine; it is unclear whether glycine directly or indirectly inhibits homooligomerization. In normal conditions, NINJ1 is autoinhibited via formation of a homodimer: in the inactive homodimer, the alpha1 and alpha2 helices (residues 41-71) form a single transmembrane region without a kink, in which hydrophilic faces of alpha1 and alpha2 helices are sequestered. Functionally, effector of various programmed cell death, such as pyroptosis and necroptosis, which mediates plasma membrane rupture (cytolysis). Oligomerizes in response to death stimuli and forms ring-like structures on the plasma membrane: acts by cutting and shedding membrane disks, like a cookie cutter, leading to membrane damage and loss that cannot be repaired by the cell. Plasma membrane rupture leads to release intracellular molecules named damage-associated molecular patterns (DAMPs) that propagate the inflammatory response. Mechanistically, mediates plasma membrane rupture by introducing hydrophilic faces of 2 alpha helices into the hydrophobic membrane. Induces plasma membrane rupture downstream of Gasdermin (GSDMA, GSDMB, GSDMC, GSDMD, or GSDME) or MLKL during pyroptosis or necroptosis, respectively. Also acts as an effector of PANoptosis and ferroptosis. Induces plasma membrane rupture in response to cell swelling caused by osmotic stress. Acts as a regulator of Toll-like receptor 4 (TLR4) signaling triggered by lipopolysaccharide (LPS) during systemic inflammation; directly binds LPS. Involved in leukocyte migration during inflammation by promoting transendothelial migration of macrophages via homotypic binding. Promotes the migration of monocytes across the brain endothelium to central nervous system inflammatory lesions. Also acts as a homophilic transmembrane adhesion molecule involved in various processes such as axonal growth, cell chemotaxis and angiogenesis. Promotes cell adhesion by mediating homophilic interactions via its extracellular N-terminal adhesion motif (N-NAM). Also involved in striated muscle growth and differentiation. The chain is Ninjurin-1 from Danio rerio (Zebrafish).